Reading from the N-terminus, the 316-residue chain is tRNA dimethylallyltransferase (316 aa).

17–24 (GPTASGKT) lines the ATP pocket. Residue 19–24 (TASGKT) participates in substrate binding. 3 interaction with substrate tRNA regions span residues 42–45 (DSAL), 166–170 (QRLSR), and 247–252 (RCVGYR).

It belongs to the IPP transferase family. Monomer. It depends on Mg(2+) as a cofactor.

The catalysed reaction is adenosine(37) in tRNA + dimethylallyl diphosphate = N(6)-dimethylallyladenosine(37) in tRNA + diphosphate. In terms of biological role, catalyzes the transfer of a dimethylallyl group onto the adenine at position 37 in tRNAs that read codons beginning with uridine, leading to the formation of N6-(dimethylallyl)adenosine (i(6)A). The protein is tRNA dimethylallyltransferase of Salmonella typhi.